Consider the following 139-residue polypeptide: Transcription antitermination protein NusB (139 aa).

It belongs to the NusB family.

Its function is as follows. Involved in transcription antitermination. Required for transcription of ribosomal RNA (rRNA) genes. Binds specifically to the boxA antiterminator sequence of the ribosomal RNA (rrn) operons. The sequence is that of Transcription antitermination protein NusB from Lactiplantibacillus plantarum (strain ATCC BAA-793 / NCIMB 8826 / WCFS1) (Lactobacillus plantarum).